The chain runs to 806 residues: Zygotic DNA replication licensing factor mcm3 (806 aa).

One can recognise an MCM domain in the interval 295-502 (VFEQLSRSLA…HDREISDHVL (208 aa)). 345-352 (GDPSVAKS) lines the ATP pocket. The short motif at 477-480 (SRFD) is the Arginine finger element. Positions 662–738 (KKRRRREGES…TDSSAKPGLS (77 aa)) are disordered. Residues 693-702 (AQDGESHDPY) are compositionally biased toward basic and acidic residues.

The protein belongs to the MCM family. As to quaternary structure, component of the mcm2-7 complex (RLF-M). The complex forms a toroidal hexameric ring with the proposed subunit order mcm2-mcm6-mcm4-mcm7-mcm3-mcm5. Begins to associate with zmcm6 into mcm complexes at the neurula stage. Component of the CMG helicase complex, composed of the mcm2-7 complex, the GINS complex and cdc45.

It is found in the nucleus. It localises to the chromosome. The catalysed reaction is ATP + H2O = ADP + phosphate + H(+). Acts as a component of the mcm2-7 complex (mcm complex) which is the putative replicative helicase essential for 'once per cell cycle' DNA replication initiation and elongation in eukaryotic cells. The active ATPase sites in the mcm2-7 ring are formed through the interaction surfaces of two neighboring subunits such that a critical structure of a conserved arginine finger motif is provided in trans relative to the ATP-binding site of the Walker A box of the adjacent subunit. The six ATPase active sites, however, are likely to contribute differentially to the complex helicase activity. The existence of maternal and zygotic forms of mcm3 and mcm6 suggests that specific forms of mcm2-7 complexes may be used during different stages of development. The protein is Zygotic DNA replication licensing factor mcm3 of Xenopus laevis (African clawed frog).